A 328-amino-acid chain; its full sequence is D-alanine--D-alanine ligase (328 aa).

The 200-residue stretch at 118–317 (LSVLTKFNIP…MPQMLDNEIT (200 aa)) folds into the ATP-grasp domain. 146 to 201 (KKALGLPFFVKPNQSGSSLGVSKVDALDQLEKALEFAFAEDNEILIESYLNGTEVS) is a binding site for ATP. Mg(2+) is bound by residues Asp272, Glu284, and Asn286.

It belongs to the D-alanine--D-alanine ligase family. Mg(2+) is required as a cofactor. It depends on Mn(2+) as a cofactor.

The protein resides in the cytoplasm. It catalyses the reaction 2 D-alanine + ATP = D-alanyl-D-alanine + ADP + phosphate + H(+). It functions in the pathway cell wall biogenesis; peptidoglycan biosynthesis. Cell wall formation. This Flavobacterium psychrophilum (strain ATCC 49511 / DSM 21280 / CIP 103535 / JIP02/86) protein is D-alanine--D-alanine ligase.